The primary structure comprises 391 residues: 1-deoxy-D-xylulose 5-phosphate reductoisomerase (391 aa).

NADPH is bound by residues Thr17, Gly18, Ser19, Ile20, Asn47, and Asn130. Position 131 (Lys131) interacts with 1-deoxy-D-xylulose 5-phosphate. Glu132 is a binding site for NADPH. Position 156 (Asp156) interacts with Mn(2+). 1-deoxy-D-xylulose 5-phosphate is bound by residues Ser157, Glu158, Ser182, and His205. Glu158 serves as a coordination point for Mn(2+). Position 211 (Gly211) interacts with NADPH. Positions 218, 223, 224, and 227 each coordinate 1-deoxy-D-xylulose 5-phosphate. Mn(2+) is bound at residue Glu227.

The protein belongs to the DXR family. Mg(2+) serves as cofactor. The cofactor is Mn(2+).

The catalysed reaction is 2-C-methyl-D-erythritol 4-phosphate + NADP(+) = 1-deoxy-D-xylulose 5-phosphate + NADPH + H(+). It participates in isoprenoid biosynthesis; isopentenyl diphosphate biosynthesis via DXP pathway; isopentenyl diphosphate from 1-deoxy-D-xylulose 5-phosphate: step 1/6. Catalyzes the NADPH-dependent rearrangement and reduction of 1-deoxy-D-xylulose-5-phosphate (DXP) to 2-C-methyl-D-erythritol 4-phosphate (MEP). This is 1-deoxy-D-xylulose 5-phosphate reductoisomerase from Rhizobium meliloti (strain 1021) (Ensifer meliloti).